Consider the following 359-residue polypeptide: UPF0283 membrane protein RHECIAT_CH0002430 (359 aa).

Positions 1–50 (MSKPPSDPPRRPPAAFAYEDEASEPRNSGRQQQGRRKPESFSENIVVTPD) are disordered. Transmembrane regions (helical) follow at residues 77-97 (FGKI…GLWT) and 111-131 (LGYA…ALVI).

Belongs to the UPF0283 family.

Its subcellular location is the cell inner membrane. This chain is UPF0283 membrane protein RHECIAT_CH0002430, found in Rhizobium etli (strain CIAT 652).